Here is a 372-residue protein sequence, read N- to C-terminus: Pre-small/secreted glycoprotein (372 aa).

A signal peptide spans 1-32; sequence MEGLSLLQLPRDKFRKSSFFVWVIILFQKAFS. Asn40 carries an N-linked (GlcNAc...) asparagine; by host glycan. 2 disulfides stabilise this stretch: Cys108–Cys135 and Cys121–Cys147. N-linked (GlcNAc...) asparagine; by host glycans are attached at residues Asn204, Asn208, Asn238, Asn257, and Asn268. Residues 320 to 340 are disordered; it reads MRHRRELQREESPTGPPGSIR.

Belongs to the filoviruses glycoprotein family. As to quaternary structure, homodimer; disulfide-linked. The homodimers are linked by two disulfide bonds in a parallel orientation. Monomer. This precursor is processed into mature sGP and delta-peptide by host furin or furin-like proteases. The cleavage site corresponds to the furin optimal cleavage sequence [KR]-X-[KR]-R. Post-translationally, N-glycosylated. In terms of processing, O-glycosylated.

It is found in the secreted. Its function is as follows. Seems to possess an anti-inflammatory activity as it can reverse the barrier-decreasing effects of TNF alpha. Might therefore contribute to the lack of inflammatory reaction seen during infection in spite the of extensive necrosis and massive virus production. Does not seem to be involved in activation of primary macrophages. Does not seem to interact specifically with neutrophils. In terms of biological role, viroporin that permeabilizes mammalian cell plasma membranes. It acts by altering permeation of ionic compounds and small molecules. This activity may lead to viral enterotoxic activity. The protein is Pre-small/secreted glycoprotein (GP) of Sudan ebolavirus (strain Boniface-76) (SEBOV).